The following is a 245-amino-acid chain: Chymotrypsinogen A (245 aa).

Disulfide bonds link cysteine 1/cysteine 122, cysteine 42/cysteine 58, cysteine 136/cysteine 201, cysteine 168/cysteine 182, and cysteine 191/cysteine 220. Residues 14–15 (SR) constitute a propeptide that is removed on maturation. One can recognise a Peptidase S1 domain in the interval 16–243 (IVNGEEAVPG…LVNWVQQTLA (228 aa)). Catalysis depends on charge relay system residues histidine 57 and aspartate 102. Positions 147–148 (TN) are excised as a propeptide. Serine 195 serves as the catalytic Charge relay system.

Belongs to the peptidase S1 family.

Its subcellular location is the secreted. The protein localises to the extracellular space. It carries out the reaction Preferential cleavage: Tyr-|-Xaa, Trp-|-Xaa, Phe-|-Xaa, Leu-|-Xaa.. This Bos taurus (Bovine) protein is Chymotrypsinogen A.